Consider the following 142-residue polypeptide: Large ribosomal subunit protein uL13 (142 aa).

The protein belongs to the universal ribosomal protein uL13 family. Part of the 50S ribosomal subunit.

In terms of biological role, this protein is one of the early assembly proteins of the 50S ribosomal subunit, although it is not seen to bind rRNA by itself. It is important during the early stages of 50S assembly. The protein is Large ribosomal subunit protein uL13 of Laribacter hongkongensis (strain HLHK9).